Consider the following 275-residue polypeptide: Exosome complex component Rrp42 (275 aa).

The protein belongs to the RNase PH family. Rrp42 subfamily. In terms of assembly, component of the archaeal exosome complex. Forms a hexameric ring-like arrangement composed of 3 Rrp41-Rrp42 heterodimers. The hexameric ring associates with a trimer of Rrp4 and/or Csl4 subunits.

It localises to the cytoplasm. Non-catalytic component of the exosome, which is a complex involved in RNA degradation. Contributes to the structuring of the Rrp41 active site. The chain is Exosome complex component Rrp42 from Saccharolobus islandicus (strain M.16.27) (Sulfolobus islandicus).